The following is a 323-amino-acid chain: MSPHKISDNHRHLMLSRFMMGNGVSIINMPFSGGQPKDGAELAPEMVEKAGLVDDLEHLGYDVKLIQNPEFKSRPSKEGPNQALMKNPLYVSNVTRQVRDAVQRELEQQRVVVNIGGDHSLAIGTVEGVQAVYDDACVLWIDAHADINTPESSPSKNLHGCPLSFSLGYAEPLPEEFAWTKRVIEERRLAFIGLRDLDPMERAFLRERNIAAYTMHHVDKYGIGRVVEMAMEHINPGKRRPVHLSFDVDACDPIVAPATGTRVPGGLTFREAMYICEAVAESGTLVAVDVMEVNPLLGNEEEAKTTVDLARSIVRTSLGQTLL.

Residues histidine 119, aspartate 142, histidine 144, and aspartate 146 each contribute to the Mn(2+) site. Substrate contacts are provided by residues 144-148 (HADIN), 155-157 (SKN), and aspartate 198. The Mn(2+) site is built by aspartate 247 and aspartate 249. The substrate site is built by threonine 261 and glutamate 292.

It belongs to the arginase family. Homotrimer. Mn(2+) is required as a cofactor.

The catalysed reaction is L-arginine + H2O = urea + L-ornithine. It participates in nitrogen metabolism; urea cycle; L-ornithine and urea from L-arginine: step 1/1. The sequence is that of Arginase (aru1) from Schizosaccharomyces pombe (strain 972 / ATCC 24843) (Fission yeast).